The sequence spans 312 residues: Zinc-finger homeodomain protein 9 (312 aa).

The interval 1–27 (MLEVRSMDMTPKSPEPESETPTRIQPA) is disordered. Position 13 is a phosphoserine (serine 13). The ZF-HD dimerization-type; degenerate zinc-finger motif lies at 52-103 (YKECLKNHAAAIGGHALDGCGEFMPSPSSTPSDPTSLKCAACGCHRNFHRRE). 2 disordered regions span residues 128 to 155 (QPHH…PPPI) and 253 to 312 (FSGG…SSSS). Residues 136–155 (PPPLAPPLPRSPNSSSPPPI) are compositionally biased toward pro residues. The homeobox DNA-binding region spans 192-255 (RKRFRTKFSS…NNKNSFKFSG (64 aa)). A Phosphoserine modification is found at serine 273.

In terms of assembly, homo- and heterodimer with other ZFHD proteins. Interacts with MIF3; this interaction prevents nuclear localization and DNA-binding to inhibit transcription regulation activity. Binds to ZHD1, ZHD2 and ZHD11. As to expression, mostly expressed in flowers, stems and inflorescence and, to a lower extent, in leaves and stems.

It is found in the nucleus. Its function is as follows. Putative transcription factor. This chain is Zinc-finger homeodomain protein 9 (ZHD9), found in Arabidopsis thaliana (Mouse-ear cress).